A 305-amino-acid polypeptide reads, in one-letter code: Protein EXORDIUM-like 2 (305 aa).

The N-terminal stretch at 1–23 (MASNYRFAIFLTLFFATAGFSAA) is a signal peptide. Asparagine 44 carries an N-linked (GlcNAc...) asparagine glycan.

The protein belongs to the EXORDIUM family.

It localises to the secreted. It is found in the extracellular space. Its subcellular location is the apoplast. May play a role in a brassinosteroid-dependent regulation of growth and development. The chain is Protein EXORDIUM-like 2 (EXL2) from Arabidopsis thaliana (Mouse-ear cress).